A 247-amino-acid chain; its full sequence is Cell division protein ZapD (247 aa).

It belongs to the ZapD family. In terms of assembly, interacts with FtsZ.

The protein resides in the cytoplasm. Its function is as follows. Cell division factor that enhances FtsZ-ring assembly. Directly interacts with FtsZ and promotes bundling of FtsZ protofilaments, with a reduction in FtsZ GTPase activity. This is Cell division protein ZapD from Klebsiella pneumoniae subsp. pneumoniae (strain ATCC 700721 / MGH 78578).